A 564-amino-acid polypeptide reads, in one-letter code: 5-aminolevulinate synthase, mitochondrial (564 aa).

The transit peptide at 1 to 57 directs the protein to the mitochondrion; sequence MESITKVSMSVCPFVRSTSTQALRQLSQTSGALANQARQCPIAGNAIRAKEISIRSY. Residues Arg-113, Ser-226, and Lys-245 each coordinate substrate. Positions 278, 306, and 350 each coordinate pyridoxal 5'-phosphate. The active site involves Lys-353. Lys-353 carries the N6-(pyridoxal phosphate)lysine modification. Positions 382 and 383 each coordinate pyridoxal 5'-phosphate. Thr-468 provides a ligand contact to substrate.

The protein belongs to the class-II pyridoxal-phosphate-dependent aminotransferase family. As to quaternary structure, homodimer. Pyridoxal 5'-phosphate is required as a cofactor.

It is found in the mitochondrion matrix. It carries out the reaction succinyl-CoA + glycine + H(+) = 5-aminolevulinate + CO2 + CoA. It functions in the pathway porphyrin-containing compound metabolism; protoporphyrin-IX biosynthesis; 5-aminolevulinate from glycine: step 1/1. Catalyzes the synthesis of 5-aminolevulinate (ALA) from succinyl-CoA and glycine, the first and rate-limiting step in heme biosynthesis. The polypeptide is 5-aminolevulinate synthase, mitochondrial (HEM1) (Candida albicans (strain SC5314 / ATCC MYA-2876) (Yeast)).